Reading from the N-terminus, the 257-residue chain is Imidazole glycerol phosphate synthase subunit HisF (257 aa).

Residues D11 and D130 contribute to the active site.

The protein belongs to the HisA/HisF family. As to quaternary structure, heterodimer of HisH and HisF.

Its subcellular location is the cytoplasm. The catalysed reaction is 5-[(5-phospho-1-deoxy-D-ribulos-1-ylimino)methylamino]-1-(5-phospho-beta-D-ribosyl)imidazole-4-carboxamide + L-glutamine = D-erythro-1-(imidazol-4-yl)glycerol 3-phosphate + 5-amino-1-(5-phospho-beta-D-ribosyl)imidazole-4-carboxamide + L-glutamate + H(+). The protein operates within amino-acid biosynthesis; L-histidine biosynthesis; L-histidine from 5-phospho-alpha-D-ribose 1-diphosphate: step 5/9. Functionally, IGPS catalyzes the conversion of PRFAR and glutamine to IGP, AICAR and glutamate. The HisF subunit catalyzes the cyclization activity that produces IGP and AICAR from PRFAR using the ammonia provided by the HisH subunit. The sequence is that of Imidazole glycerol phosphate synthase subunit HisF from Actinobacillus succinogenes (strain ATCC 55618 / DSM 22257 / CCUG 43843 / 130Z).